The sequence spans 517 residues: Putative alpha-L-fucosidase 1 (517 aa).

The N-terminal stretch at 1 to 20 is a signal peptide; sequence MATILLLLLGLLVGLPLLRA. N119, N249, N296, N321, N352, N496, and N511 each carry an N-linked (GlcNAc...) asparagine glycan.

This sequence belongs to the glycosyl hydrolase 29 family.

Its subcellular location is the secreted. It is found in the extracellular space. It localises to the apoplast. It catalyses the reaction an alpha-L-fucoside + H2O = L-fucose + an alcohol. Its function is as follows. Alpha-L-fucosidase is responsible for hydrolyzing the alpha-1,6-linked fucose joined to the reducing-end N-acetylglucosamine of the carbohydrate moieties of glycoproteins. Active only against 2'-fucosyl-lactitol when heterologously expressed. The chain is Putative alpha-L-fucosidase 1 from Oryza sativa subsp. japonica (Rice).